The following is a 242-amino-acid chain: Endothelial protein C receptor (242 aa).

An N-terminal signal peptide occupies residues 1-17 (MLTKFLPLLLLLLPGCA). Residues 18 to 214 (LCNSDGSQSL…GSQTGRSYTS (197 aa)) are Extracellular-facing. Asn46, Asn63, Asn140, Asn166, and Asn176 each carry an N-linked (GlcNAc...) asparagine glycan. Disulfide bonds link Cys119-Cys190 and Cys223-Cys236. The chain crosses the membrane as a helical span at residues 215 to 235 (LVLGILMGCFIIAGVAVGIFM). Over 236–242 (CTSGRRC) the chain is Cytoplasmic.

In terms of tissue distribution, expressed in endothelial cells.

It localises to the membrane. Binds activated protein C. Enhances protein C activation by the thrombin-thrombomodulin complex; plays a role in the protein C pathway controlling blood coagulation. The polypeptide is Endothelial protein C receptor (Procr) (Mus musculus (Mouse)).